The primary structure comprises 392 residues: Na(+)/H(+) antiporter NhaA (392 aa).

11 helical membrane-spanning segments follow: residues 16 to 36 (ILLI…LSAA), 58 to 78 (LLLW…GLEV), 93 to 113 (ITLP…IFIL), 124 to 144 (GWAI…SLLG), 153 to 173 (IFLM…IALF), 176 to 196 (TDLS…LFIM), 199 to 219 (MDVA…VSVL), 257 to 277 (DLHY…NAGV), 295 to 315 (VMLG…WLAI), 328 to 348 (WMML…SLFV), and 362 to 382 (ADKL…YLIL).

Belongs to the NhaA Na(+)/H(+) (TC 2.A.33) antiporter family.

Its subcellular location is the cell inner membrane. It catalyses the reaction Na(+)(in) + 2 H(+)(out) = Na(+)(out) + 2 H(+)(in). In terms of biological role, na(+)/H(+) antiporter that extrudes sodium in exchange for external protons. The protein is Na(+)/H(+) antiporter NhaA of Sulfurovum sp. (strain NBC37-1).